The sequence spans 463 residues: Argininosuccinate lyase (463 aa).

This sequence belongs to the lyase 1 family. Argininosuccinate lyase subfamily.

The protein resides in the cytoplasm. The catalysed reaction is 2-(N(omega)-L-arginino)succinate = fumarate + L-arginine. Its pathway is amino-acid biosynthesis; L-arginine biosynthesis; L-arginine from L-ornithine and carbamoyl phosphate: step 3/3. The sequence is that of Argininosuccinate lyase from Methylorubrum extorquens (strain CM4 / NCIMB 13688) (Methylobacterium extorquens).